The following is a 173-amino-acid chain: Regulatory protein RecX (173 aa).

Belongs to the RecX family.

It localises to the cytoplasm. Functionally, modulates RecA activity. In Mycobacterium marinum (strain ATCC BAA-535 / M), this protein is Regulatory protein RecX.